Consider the following 443-residue polypeptide: Signal recognition particle 54 kDa protein (443 aa).

Residues 107-114 (GIQGSGKT), 189-193 (DTAGR), and 247-250 (TKLD) contribute to the GTP site.

It belongs to the GTP-binding SRP family. SRP54 subfamily. In terms of assembly, part of the signal recognition particle protein translocation system, which is composed of SRP and FtsY. Archaeal SRP consists of a 7S RNA molecule of 300 nucleotides and two protein subunits: SRP54 and SRP19.

It is found in the cytoplasm. The enzyme catalyses GTP + H2O = GDP + phosphate + H(+). Its function is as follows. Involved in targeting and insertion of nascent membrane proteins into the cytoplasmic membrane. Binds to the hydrophobic signal sequence of the ribosome-nascent chain (RNC) as it emerges from the ribosomes. The SRP-RNC complex is then targeted to the cytoplasmic membrane where it interacts with the SRP receptor FtsY. In Pyrococcus furiosus (strain ATCC 43587 / DSM 3638 / JCM 8422 / Vc1), this protein is Signal recognition particle 54 kDa protein.